The primary structure comprises 331 residues: 6-phosphogluconolactonase (331 aa).

Belongs to the cycloisomerase 2 family.

It catalyses the reaction 6-phospho-D-glucono-1,5-lactone + H2O = 6-phospho-D-gluconate + H(+). Its pathway is carbohydrate degradation; pentose phosphate pathway; D-ribulose 5-phosphate from D-glucose 6-phosphate (oxidative stage): step 2/3. Its function is as follows. Catalyzes the hydrolysis of 6-phosphogluconolactone to 6-phosphogluconate. This Salmonella typhi protein is 6-phosphogluconolactonase.